The sequence spans 2531 residues: Neurogenic locus notch homolog protein 1 (2531 aa).

Positions 1–18 (MPRLLTPLLCLTLLPALA) are cleaved as a signal peptide. Residues 19 to 1725 (ARGLRCSQPS…VEPPLPSQLH (1707 aa)) are Extracellular-facing. EGF-like domains follow at residues 20–58 (RGLRCSQPSGTCLNGGRCEVANGTEACVCSGAFVGQRCQ), 59–99 (DSNP…PLCL), 102–139 (LDNACLANPCRNGGTCDLLTLTEYKCRCPPGWSGKSCQ), and 140–176 (QADPCASNPCANGGQCLPFESSYICRCPPGFHGPTCR). Intrachain disulfides connect Cys-24/Cys-37, Cys-31/Cys-46, Cys-63/Cys-74, Cys-68/Cys-87, Cys-89/Cys-98, Cys-106/Cys-117, Cys-111/Cys-127, Cys-129/Cys-138, Cys-144/Cys-155, Cys-149/Cys-164, Cys-166/Cys-175, Cys-182/Cys-195, Cys-189/Cys-204, Cys-206/Cys-215, Cys-222/Cys-233, Cys-227/Cys-243, Cys-245/Cys-254, Cys-261/Cys-272, Cys-266/Cys-281, Cys-283/Cys-292, Cys-299/Cys-312, Cys-306/Cys-321, Cys-323/Cys-332, Cys-339/Cys-350, Cys-344/Cys-359, Cys-361/Cys-370, Cys-376/Cys-387, Cys-381/Cys-398, Cys-400/Cys-409, Cys-416/Cys-429, Cys-423/Cys-438, and Cys-440/Cys-449. Ser-65 carries O-linked (Glc...) serine glycosylation. A glycan (O-linked (Fuc...) threonine) is linked at Thr-73. O-linked (Fuc...) threonine glycosylation occurs at Thr-116. Ser-146 is a glycosylation site (O-linked (Glc...) serine). The 39-residue stretch at 178–216 (DVNECSQNPGLCRHGGTCHNEIGSYRCACRATHTGPHCE) folds into the EGF-like 5; calcium-binding domain. O-linked (Fuc...) threonine glycosylation is present at Thr-194. The EGF-like 6 domain occupies 218 to 255 (PYVPCSPSPCQNGGTCRPTGDTTHECACLPGFAGQNCE). Thr-232 carries O-linked (Fuc...) threonine; alternate glycosylation. O-linked (GalNAc...) threonine; alternate glycosylation is present at Thr-232. In terms of domain architecture, EGF-like 7; calcium-binding spans 257-293 (NVDDCPGNNCKNGGACVDGVNTYNCRCPPEWTGQYCT). An EGF-like 8; calcium-binding domain is found at 295-333 (DVDECQLMPNACQNGGTCHNTHGGYNCVCVNGWTGEDCS). The O-linked (Fuc...) threonine glycan is linked to Thr-311. The EGF-like 9; calcium-binding domain occupies 335–371 (NIDDCASAACFQGATCHDRVASFYCECPHGRTGLLCH). The O-linked (Glc...) serine glycan is linked to Ser-341. O-linked (Fuc...) threonine glycosylation is present at Thr-349. The 39-residue stretch at 372–410 (LNDACISNPCNEGSNCDTNPVNGKAICTCPSGYTGPACS) folds into the EGF-like 10; calcium-binding domain. O-linked (Glc...) serine glycosylation occurs at Ser-378. The 39-residue stretch at 412–450 (DVDECALGANPCEHAGKCLNTLGSFECQCLQGYTGPRCE) folds into the EGF-like 11; calcium-binding domain. An interaction with DLL4 region spans residues 420-421 (AN). Ca(2+) contacts are provided by Thr-432 and Ser-435. An O-linked (Glc...) serine glycan is attached at Ser-435. Residues 448–452 (RCEID) are interaction with DLL4. Ca(2+) is bound by residues Asp-452, Val-453, and Glu-455. The EGF-like 12; calcium-binding domain occupies 452 to 488 (DVNECISNPCQNDATCLDQIGEFQCICMPGYEGVYCE). 3 cysteine pairs are disulfide-bonded: Cys-456–Cys-467, Cys-461–Cys-476, and Cys-478–Cys-487. O-linked (Glc...) serine glycosylation is present at Ser-458. O-linked (Fuc...) threonine glycosylation occurs at Thr-466. Positions 469 and 470 each coordinate Ca(2+). 3 residues coordinate Ca(2+): Asn-490, Thr-491, and Glu-493. The region spanning 490 to 526 (NTDECASSPCLHNGHCMDKINEFQCQCPKGFNGHLCQ) is the EGF-like 13; calcium-binding domain. 75 disulfides stabilise this stretch: Cys-494–Cys-505, Cys-499–Cys-514, Cys-516–Cys-525, Cys-532–Cys-543, Cys-537–Cys-552, Cys-554–Cys-563, Cys-570–Cys-580, Cys-575–Cys-589, Cys-591–Cys-600, Cys-607–Cys-618, Cys-612–Cys-627, Cys-629–Cys-638, Cys-645–Cys-655, Cys-650–Cys-664, Cys-666–Cys-675, Cys-682–Cys-693, Cys-687–Cys-702, Cys-704–Cys-713, Cys-720–Cys-730, Cys-725–Cys-739, Cys-741–Cys-750, Cys-757–Cys-768, Cys-762–Cys-777, Cys-779–Cys-788, Cys-795–Cys-806, Cys-800–Cys-815, Cys-817–Cys-826, Cys-833–Cys-844, Cys-838–Cys-855, Cys-857–Cys-866, Cys-873–Cys-884, Cys-878–Cys-893, Cys-895–Cys-904, Cys-911–Cys-922, Cys-916–Cys-931, Cys-933–Cys-942, Cys-949–Cys-960, Cys-954–Cys-969, Cys-971–Cys-980, Cys-987–Cys-998, Cys-992–Cys-1007, Cys-1009–Cys-1018, Cys-1025–Cys-1036, Cys-1030–Cys-1045, Cys-1047–Cys-1056, Cys-1063–Cys-1074, Cys-1068–Cys-1083, Cys-1085–Cys-1094, Cys-1101–Cys-1122, Cys-1116–Cys-1131, Cys-1133–Cys-1142, Cys-1149–Cys-1160, Cys-1154–Cys-1169, Cys-1171–Cys-1180, Cys-1187–Cys-1198, Cys-1192–Cys-1207, Cys-1209–Cys-1218, Cys-1225–Cys-1244, Cys-1238–Cys-1253, Cys-1255–Cys-1264, Cys-1271–Cys-1284, Cys-1276–Cys-1293, Cys-1295–Cys-1304, Cys-1311–Cys-1322, Cys-1316–Cys-1334, Cys-1336–Cys-1345, Cys-1352–Cys-1363, Cys-1357–Cys-1372, Cys-1374–Cys-1383, Cys-1391–Cys-1403, Cys-1397–Cys-1414, Cys-1416–Cys-1425, Cys-1449–Cys-1472, Cys-1454–Cys-1467, and Cys-1463–Cys-1479. Ser-496 carries an O-linked (Glc...) serine glycan. 2 residues coordinate Ca(2+): Asp-507 and Lys-508. Residues 528 to 564 (DVDECASTPCKNGAKCLDGPNTYTCVCTEGYTGTHCE) enclose the EGF-like 14; calcium-binding domain. O-linked (Glc...) serine glycosylation occurs at Ser-534. Residues 566 to 601 (DIDECDPDPCHYGSCKDGVATFTCLCQPGYTGHHCE) enclose the EGF-like 15; calcium-binding domain. Positions 603-639 (NINECHSQPCRHGGTCQDRDNSYLCLCLKGTTGPNCE) constitute an EGF-like 16; calcium-binding domain. An O-linked (Glc...) serine glycan is attached at Ser-609. Residue Thr-617 is glycosylated (O-linked (Fuc...) threonine). The EGF-like 17; calcium-binding domain occupies 641 to 676 (NLDDCASNPCDSGTCLDKIDGYECACEPGYTGSMCN). An O-linked (Glc...) serine glycan is attached at Ser-647. The 37-residue stretch at 678-714 (NIDECAGSPCHNGGTCEDGIAGFTCRCPEGYHDPTCL) folds into the EGF-like 18; calcium-binding domain. O-linked (Fuc...) threonine glycosylation occurs at Thr-692. One can recognise an EGF-like 19; calcium-binding domain in the interval 716 to 751 (EVNECNSNPCIHGACRDGLNGYKCDCAPGWSGTNCD). Ser-722 carries O-linked (Glc...) serine glycosylation. The EGF-like 20; calcium-binding domain maps to 753–789 (NNNECESNPCVNGGTCKDMTSGYVCTCREGFSGPNCQ). A glycan (O-linked (Glc...) serine) is linked at Ser-759. A glycan (O-linked (Fuc...) threonine) is linked at Thr-767. Ser-784 carries an O-linked (GlcNAc) serine glycan. Positions 791–827 (NINECASNPCLNQGTCIDDVAGYKCNCPLPYTGATCE) constitute an EGF-like 21; calcium-binding domain. Ser-797 carries O-linked (Glc...) serine glycosylation. O-linked (Fuc...) threonine glycosylation is present at Thr-805. The EGF-like 22 domain occupies 829–867 (VLAPCATSPCKNSGVCKESEDYESFSCVCPTGWQGQTCE). The 37-residue stretch at 869-905 (DINECVKSPCRHGASCQNTNGSYRCLCQAGYTGRNCE) folds into the EGF-like 23; calcium-binding domain. An N-linked (GlcNAc...) asparagine glycan is attached at Asn-888. The O-linked (GlcNAc) threonine glycan is linked to Thr-900. The 37-residue stretch at 907–943 (DIDDCRPNPCHNGGSCTDGINTAFCDCLPGFQGAFCE) folds into the EGF-like 24 domain. Residue Ser-921 is glycosylated (O-linked (Fuc) serine). An EGF-like 25; calcium-binding domain is found at 945–981 (DINECASNPCQNGANCTDCVDSYTCTCPVGFNGIHCE). O-linked (Glc...) serine glycosylation occurs at Ser-951. N-linked (GlcNAc...) asparagine glycosylation occurs at Asn-959. Residues 983–1019 (NTPDCTESSCFNGGTCVDGINSFTCLCPPGFTGSYCQ) enclose the EGF-like 26 domain. A glycan (O-linked (Fuc...) threonine) is linked at Thr-997. An EGF-like 27; calcium-binding domain is found at 1021–1057 (DVNECDSRPCLHGGTCQDSYGTYKCTCPQGYTGLNCQ). O-linked (Glc...) serine glycosylation occurs at Ser-1027. O-linked (Fuc...) threonine glycosylation occurs at Thr-1035. EGF-like domains follow at residues 1059-1095 (LVRWCDSAPCKNGGRCWQTNTQYHCECRSGWTGVNCD) and 1097-1143 (LSVS…SYCE). Residue Ser-1065 is glycosylated (O-linked (Glc...) serine). The EGF-like 30; calcium-binding domain maps to 1145–1181 (EVDECSPNPCQNGATCTDYLGGFSCKCVAGYHGSNCS). Thr-1159 carries O-linked (Fuc...) threonine glycosylation. Asn-1179 is a glycosylation site (N-linked (GlcNAc...) asparagine). The EGF-like 31; calcium-binding domain maps to 1183-1219 (EINECLSQPCQNGGTCIDLTNSYKCSCPRGTQGVHCE). Ser-1189 is a glycosylation site (O-linked (Glc...) serine). Residue Thr-1197 is glycosylated (O-linked (Fuc...) threonine). The EGF-like 32; calcium-binding domain maps to 1221–1265 (NVDDCHPPLDPASRSPKCFNNGTCVDQVGGYTCTCPPGFVGERCE). Asn-1241 carries an N-linked (GlcNAc...) asparagine glycan. 4 EGF-like domains span residues 1267-1305 (DVNECLSNPCDPRGTQNCVQRVNDFHCECRAGHTGRRCE), 1307-1346 (VINGCRGKPCKNGGVCAVASNTARGFICRCPAGFEGATCE), 1348-1384 (DARTCGSLRCLNGGTCISGPRSPTCLCLGSFTGPECQ), and 1387-1426 (ASSPCVGSNPCYNQGTCEPTSENPFYRCLCPAKFNGLLCH). O-linked (Glc...) serine glycosylation occurs at Ser-1273. O-linked (Fuc...) threonine glycosylation occurs at Thr-1362. O-linked (GlcNAc...) threonine glycosylation occurs at Thr-1379. Residue Thr-1402 is glycosylated (O-linked (Fuc...) threonine; alternate). O-linked (GalNAc...) threonine; alternate glycosylation occurs at Thr-1402. LNR repeat units lie at residues 1449–1489 (CELP…PWKN), 1490–1531 (CTQS…CNPL), and 1532–1571 (YDQYCKDHFSDGHCDQGCNSAECEWDGLDCAEHVPERLAA). Positions 1457, 1460, 1475, and 1478 each coordinate Ca(2+). N-linked (GlcNAc...) asparagine glycosylation is present at Asn-1489. Cystine bridges form between Cys-1490–Cys-1514, Cys-1496–Cys-1509, Cys-1505–Cys-1521, Cys-1536–Cys-1549, and Cys-1545–Cys-1561. Asn-1587 carries N-linked (GlcNAc...) asparagine glycosylation. The interval 1718 to 1750 (PPLPSQLHLMYVAAAAFVLLFFVGCGVLLSRKR) is interaction with PSEN1. The helical transmembrane segment at 1726–1746 (LMYVAAAAFVLLFFVGCGVLL) threads the bilayer. The Cytoplasmic segment spans residues 1747-2531 (SRKRRRQHGQ…QITHIPEAFK (785 aa)). Residue Lys-1749 forms a Glycyl lysine isopeptide (Lys-Gly) (interchain with G-Cter in ubiquitin) linkage. The interval 1770 to 1798 (KKKRREPLGEDSVGLKPLKNASDGALMDD) is disordered. A Phosphothreonine modification is found at Thr-1851. 5 ANK repeats span residues 1917-1946 (TGETALHLAARYSRSDAAKRLLEASADANI), 1950-1980 (MGRTPLHAAVSADAQGVFQILLRNRATDLDA), 1984-2013 (DGTTPLILAARLAVEGMLEDLINSHADVNA), 2017-2046 (LGKSALHWAAAVNNVDAAVVLLKNGANKDM), and 2050-2079 (KEETPLFLAAREGSYETAKVLLDHFANRDI). The interval 1937-1945 (LLEASADAN) is HIF1AN-binding. Asn-1945 is subject to (3S)-3-hydroxyasparagine; by HIF1AN; partial. The HIF1AN-binding stretch occupies residues 2004 to 2012 (LINSHADVN). At Asn-2012 the chain carries (3S)-3-hydroxyasparagine; by HIF1AN; partial. Disordered stretches follow at residues 2140–2185 (KSAT…DSSS), 2382–2428 (QPQN…SLPV), and 2440–2531 (PTSL…EAFK). The span at 2382 to 2395 (QPQNLQPPSQPHLS) shows a compositional bias: low complexity. The segment covering 2440-2478 (PTSLPSSMVPPMTTTQFLTPPSQHSYSSSPVDNTPSHQL) has biased composition (polar residues). A compositionally biased stretch (low complexity) spans 2488-2503 (PSPESPDQWSSSSPHS). Positions 2504–2524 (NISDWSEGISSPPTTMPSQIT) are enriched in polar residues.

Belongs to the NOTCH family. Heterodimer of a C-terminal fragment N(TM) and an N-terminal fragment N(EC) which are probably linked by disulfide bonds. Interacts with DNER, DTX1, DTX2 and RBPJ/RBPSUH. Also interacts with MAML1, MAML2 and MAML3 which act as transcriptional coactivators for NOTCH1. Notch 1 intracellular domain interacts with SNW1; the interaction involves multimerized NOTCH1 NICD and is implicated in a formation of an intermediate preactivation complex which associates with DNA-bound CBF-1/RBPJ. The activated membrane-bound form interacts with AAK1 which promotes NOTCH1 stabilization. Forms a trimeric complex with FBXW7 and SGK1. Interacts with HIF1AN. HIF1AN negatively regulates the function of notch intracellular domain (NICD), accelerating myogenic differentiation. Interacts (via NICD) with SNAI1 (via zinc fingers); the interaction induces SNAI1 degradation via MDM2-mediated ubiquitination and inhibits SNAI1-induced cell invasion. Interacts (via NICD) with MDM2A. Interacts (via NICD) with BCL6; the interaction decreases MAML1 recruitment by NOTCH1 NICD on target genes DNA and inhibits NOTCH1 transactivation activity. Interacts with THBS4. Interacts (via the EGF-like repeat region) with CCN3 (via CTCK domain). Interacts (via EGF-like domains) with DLL4 (via N-terminal DSL and MNNL domains). Interacts with ZMIZ1. Interacts (via NICD domain) with MEGF10 (via the cytoplasmic domain). Interacts with DLL1 and JAG1. Interacts (via NICD domain) with PRAG1. Forms a complex with PRAG1, N1ICD and MAML1, in a MAML1-dependent manner. Interacts (via transmembrane region) with PSEN1; the interaction is direct. Interacts with ZFP64. Synthesized in the endoplasmic reticulum as an inactive form which is proteolytically cleaved by a furin-like convertase in the trans-Golgi network before it reaches the plasma membrane to yield an active, ligand-accessible form. Cleavage results in a C-terminal fragment N(TM) and a N-terminal fragment N(EC). Following ligand binding, it is cleaved by ADAM17 to yield a membrane-associated intermediate fragment called notch extracellular truncation (NEXT). Following endocytosis, this fragment is then cleaved by one of the catalytic subunits of gamma-secretase (PSEN1 or PSEN2) to release a Notch-derived peptide containing the intracellular domain (NICD) from the membrane. In terms of processing, phosphorylated. Post-translationally, O-linked glycosylation by GALNT11 is involved in determination of left/right symmetry: glycosylation promotes activation of NOTCH1, possibly by promoting cleavage by ADAM17, modulating the balance between motile and immotile (sensory) cilia at the left-right organiser (LRO). O-glycosylated on the EGF-like domains. O-glucosylated at Ser-435 by KDELC1 and KDELC2. Contains both O-linked fucose and O-linked glucose in the EGF-like domains 11, 12 and 13, which are interacting with the residues on DLL4. O-glycosylation at Ser-1027 is only partial. MFNG-, RFNG- and LFNG-mediated modification of O-fucose residues at specific EGF-like domains results in inhibition of its activation by JAG1 and enhancement of its activation by DLL1 via an increased binding to DLL1. Ubiquitinated. Undergoes 'Lys-29'-linked polyubiquitination by ITCH; promotes the lysosomal degradation of non-activated internalized NOTCH1. Deubiquitination by USP12 is required for transport of internalized non-activated receptor from late endosomes to lysosomes for degradation. Monoubiquitination at Lys-1749 is required for activation by gamma-secretase cleavage, it promotes interaction with AAK1, which stabilizes it. Deubiquitination by EIF3F is necessary for nuclear import of activated Notch. In terms of processing, hydroxylated at Asn-1945 and Asn-2012 by HIF1AN. Hydroxylation reduces affinity for HI1AN and may thus indirectly modulate negative regulation of NICD. Highly expressed in the brain, lung and thymus. Expressed at lower levels in the spleen, bone-marrow, spinal cord, eyes, mammary gland, liver, intestine, skeletal muscle, kidney and heart. In the hair follicle, highly expressed exclusively in the epithelial compartment.

Its subcellular location is the cell membrane. It localises to the late endosome membrane. The protein localises to the nucleus. In terms of biological role, functions as a receptor for membrane-bound ligands Jagged-1 (JAG1), Jagged-2 (JAG2) and Delta-1 (DLL1) to regulate cell-fate determination. Upon ligand activation through the released notch intracellular domain (NICD) it forms a transcriptional activator complex with RBPJ/RBPSUH and activates genes of the enhancer of split locus. Affects the implementation of differentiation, proliferation and apoptotic programs. Involved in angiogenesis; negatively regulates endothelial cell proliferation and migration and angiogenic sprouting. Involved in the maturation of both CD4(+) and CD8(+) cells in the thymus. Important for follicular differentiation and possibly cell fate selection within the follicle. During cerebellar development, functions as a receptor for neuronal DNER and is involved in the differentiation of Bergmann glia. Represses neuronal and myogenic differentiation. May play an essential role in postimplantation development, probably in some aspect of cell specification and/or differentiation. May be involved in mesoderm development, somite formation and neurogenesis. May enhance HIF1A function by sequestering HIF1AN away from HIF1A. Required for the THBS4 function in regulating protective astrogenesis from the subventricular zone (SVZ) niche after injury. Involved in determination of left/right symmetry by modulating the balance between motile and immotile (sensory) cilia at the left-right organiser (LRO). This Mus musculus (Mouse) protein is Neurogenic locus notch homolog protein 1 (Notch1).